The following is a 170-amino-acid chain: CASP-like protein 1F1 (170 aa).

Residues methionine 1–glycine 16 are Cytoplasmic-facing. Residues valine 17–isoleucine 37 form a helical membrane-spanning segment. Topologically, residues threonine 38–tyrosine 62 are extracellular. The chain crosses the membrane as a helical span at residues leucine 63–leucine 83. At alanine 84 to arginine 88 the chain is on the cytoplasmic side. A helical transmembrane segment spans residues glycine 89–phenylalanine 109. Residues serine 110–arginine 141 lie on the Extracellular side of the membrane. Residues valine 142 to leucine 162 form a helical membrane-spanning segment. The Cytoplasmic segment spans residues threonine 163–tyrosine 170.

It belongs to the Casparian strip membrane proteins (CASP) family. Homodimer and heterodimers.

The protein localises to the cell membrane. The polypeptide is CASP-like protein 1F1 (Arabidopsis lyrata subsp. lyrata (Lyre-leaved rock-cress)).